The following is a 205-amino-acid chain: Small ribosomal subunit protein uS4 (205 aa).

The span at 1 to 16 (MSKRESSKYKIDRRMG) shows a compositional bias: basic and acidic residues. Residues 1–46 (MSKRESSKYKIDRRMGENIWGRPKSPVNRREYGPGQHGQRRKSKLS) are disordered. The region spanning 94–157 (SRLDAIVYRA…KQLVSVLESV (64 aa)) is the S4 RNA-binding domain.

This sequence belongs to the universal ribosomal protein uS4 family. Part of the 30S ribosomal subunit. Contacts protein S5. The interaction surface between S4 and S5 is involved in control of translational fidelity.

Functionally, one of the primary rRNA binding proteins, it binds directly to 16S rRNA where it nucleates assembly of the body of the 30S subunit. With S5 and S12 plays an important role in translational accuracy. The chain is Small ribosomal subunit protein uS4 from Sinorhizobium fredii (strain NBRC 101917 / NGR234).